A 121-amino-acid polypeptide reads, in one-letter code: Large ribosomal subunit protein uL18 (121 aa).

This sequence belongs to the universal ribosomal protein uL18 family. In terms of assembly, part of the 50S ribosomal subunit; part of the 5S rRNA/L5/L18/L25 subcomplex. Contacts the 5S and 23S rRNAs.

Functionally, this is one of the proteins that bind and probably mediate the attachment of the 5S RNA into the large ribosomal subunit, where it forms part of the central protuberance. This chain is Large ribosomal subunit protein uL18, found in Acidovorax ebreus (strain TPSY) (Diaphorobacter sp. (strain TPSY)).